The chain runs to 331 residues: Protein MGF 300-4L (331 aa).

The protein belongs to the asfivirus MGF 300 family.

This African swine fever virus (isolate Tick/Malawi/Lil 20-1/1983) (ASFV) protein is Protein MGF 300-4L.